Here is a 706-residue protein sequence, read N- to C-terminus: Double-strand break repair protein MRE11 (706 aa).

Position 2 is an N-acetylserine (serine 2). Serine 2 carries the phosphoserine modification. Mn(2+) contacts are provided by aspartate 20, histidine 22, and aspartate 60. The tract at residues 87–117 (RPVQFEVISDQSVNFGFSKFPWVNYQDGNLN) is interaction with NBN. Residue asparagine 128 participates in Mn(2+) binding. Catalysis depends on histidine 129, which acts as the Proton donor. 3 residues coordinate Mn(2+): histidine 217, histidine 245, and histidine 247. Residue lysine 255 forms a Glycyl lysine isopeptide (Lys-Gly) (interchain with G-Cter in SUMO2) linkage. Serine 275 bears the Phosphoserine mark. Lysine 282 is covalently cross-linked (Glycyl lysine isopeptide (Lys-Gly) (interchain with G-Cter in UFM1)). Lysine 339 is covalently cross-linked (Glycyl lysine isopeptide (Lys-Gly) (interchain with G-Cter in ubiquitin)). Glycyl lysine isopeptide (Lys-Gly) (interchain with G-Cter in SUMO) cross-links involve residues lysine 384 and lysine 468. Residue lysine 481 forms a Glycyl lysine isopeptide (Lys-Gly) (interchain with G-Cter in ubiquitin) linkage. Residues 505–514 (FRESRQRNTN) are compositionally biased toward basic and acidic residues. Residues 505–706 (FRESRQRNTN…SSSCPRRNRR (202 aa)) form a disordered region. The span at 531–541 (RSQSETSTSAF) shows a compositional bias: polar residues. Basic residues predominate over residues 569–579 (GRGRGRGRRGA). Asymmetric dimethylarginine occurs at positions 570, 572, 574, 576, 577, 580, 587, 592, and 594. A GAR motif is present at residues 570–594 (RGRGRGRRGARGQSSAPRGGSQRGR). Over residues 580 to 589 (RGQSSAPRGG) the composition is skewed to low complexity. The segment covering 603-617 (RGRSSKATSSTSRNM) has biased composition (polar residues). Phosphoserine is present on residues serine 618, serine 640, and serine 648. A compositionally biased stretch (acidic residues) spans 643 to 653 (IEVDDSDEDDI). Polar residues predominate over residues 655 to 679 (PTNSRADQRWSGTTSSKRMSQSQTA). Lysine 671 carries the post-translational modification N6-lactoyllysine. Phosphoserine is present on residues serine 674, serine 676, serine 686, and serine 699. Residues 684-694 (FESDEDDDDDP) are compositionally biased toward acidic residues.

The protein belongs to the MRE11/RAD32 family. As to quaternary structure, component of the MRN complex composed of two heterodimers RAD50 and MRE11 associated with a single NBN. The MRN complexes dimerize on DNA to form joined MRN-MRN oligomers required for DNA double-strand break repair. As part of the MRN complex, interacts with MCM9; the interaction recruits the complex to DNA repair sites. Component of the BASC complex, at least composed of BRCA1, MSH2, MSH6, MLH1, ATM, BLM, RAD50, MRE11 and NBN. Found in a complex with TERF2. Interacts with DCLRE1C/Artemis and DCLRE1B/Apollo. Interacts with ATF2. Interacts with EXD2. Interacts with MRNIP. Interacts with SAMHD1; leading to stimulate 3'-5' exonuclease activity. Interacts (when ubiquitinated) with UBQLN4 (via its UBA domain). Interacts with CYREN (via XLF motif). Interacts with GFI1; promoting methylation by PRMT1. Interacts with DYNLL1; inhibiting the activity of MRE11. Interacts with C1QBP and RAD50; interaction takes place in absence of DNA damage to form the MRC (MRE11-RAD50-C1QBP) complex that inhibits the activity of MRE11. Interacts with AGER/RAGE; AGER is recruited to DNA double-strand break sites where it enhances MRE11 endonuclease activity to promote DNA repair. The cofactor is Mn(2+). In terms of processing, phosphorylated by ATM at Ser-674 and Ser-676 in response to DNA damage, promoting MRE11 activity: phosphorylation activates MRE11 by preventing the interaction between MRE11 and the C1QBP inhibitor. Phosphorylation at Ser-648 by PLK1 primes for phosphorylation at Ser-686 by CK2, inhibiting recruitment of the MRN complex to DNA damage sites. Asymmetric dimethylation by PRMT1 promotes MRE11 exonuclease activity. Post-translationally, lactylation at Lys-671 by CREBBP/CBP in response to DNA damage promotes DNA binding and MRE11 activity. In terms of processing, acetylated on lysine residues by KAT2A /GCN5. Ubiquitinated following DNA damage. Ubiquitination triggers interaction with UBQLN4, leading to MRE11 removal from chromatin and degradation by the proteasome. Ubiquitinated at Lys-339 and Lys-481 by RNF126 via 'Lys-27'- and 'Lys-29'-linked polyubiquitin chains, promoting the exonuclease activity of MRE11. Post-translationally, SUMOylated by PIAS1, stabilizing MRE11 on chromatin during end resection. DeSUMOylated by SENP3 following removal from DNA double-strand breaks (DSBs). In terms of processing, ufmylation at Lys-282 promotes MRE11 activity and is required for activation of the ATM and ATR kinases by the MRN complex.

The protein localises to the nucleus. Its subcellular location is the chromosome. It is found in the telomere. Its activity is regulated as follows. Interaction with SAMHD1 stimulates the double-strand-specific 3'-5' exonuclease activity. RBBP8/CtIP specifically promotes the endonuclease activity to clear protein-DNA adducts and generate clean double-strand break ends. DYNLL1-binding inhibits the activity of MRE11. MRE11 activity is inhibited by C1QBP: in absence of DNA damage, C1QBP interacts with unphosphorylated MRE11, preventing formation and activity of the MRN complex. In terms of biological role, core component of the MRN complex, which plays a central role in double-strand break (DSB) repair, DNA recombination, maintenance of telomere integrity and meiosis. The MRN complex is involved in the repair of DNA double-strand breaks (DSBs) via homologous recombination (HR), an error-free mechanism which primarily occurs during S and G2 phases. The complex (1) mediates the end resection of damaged DNA, which generates proper single-stranded DNA, a key initial steps in HR, and is (2) required for the recruitment of other repair factors and efficient activation of ATM and ATR upon DNA damage. Within the MRN complex, MRE11 possesses both single-strand endonuclease activity and double-strand-specific 3'-5' exonuclease activity. After DSBs, MRE11 is loaded onto DSBs sites and cleaves DNA by cooperating with RBBP8/CtIP to initiate end resection. MRE11 first endonucleolytically cleaves the 5' strand at DNA DSB ends to prevent non-homologous end joining (NHEJ) and licence HR. It then generates a single-stranded DNA gap via 3' to 5' exonucleolytic degradation to create entry sites for EXO1- and DNA2-mediated 5' to 3' long-range resection, which is required for single-strand invasion and recombination. RBBP8/CtIP specifically promotes the endonuclease activity of MRE11 to clear protein-DNA adducts and generate clean double-strand break ends. MRE11 endonuclease activity is also enhanced by AGER/RAGE. The MRN complex is also required for DNA damage signaling via activation of the ATM and ATR kinases: the nuclease activity of MRE11 is not required to activate ATM and ATR. The MRN complex is also required for the processing of R-loops. The MRN complex is involved in the activation of the cGAS-STING pathway induced by DNA damage during tumorigenesis: the MRN complex acts by displacing CGAS from nucleosome sequestration, thereby activating it. In telomeres the MRN complex may modulate t-loop formation. The protein is Double-strand break repair protein MRE11 of Mus musculus (Mouse).